The primary structure comprises 95 residues: uncharacterized protein (95 aa).

Positions 14-50 form a coiled coil; it reads KMEQKLQEQLDGLLEKYTELLLGETNDELKEEVKQWI.

This is an uncharacterized protein from Bacillus subtilis (strain 168).